The following is a 185-amino-acid chain: Casparian strip membrane protein 1 (185 aa).

The Cytoplasmic portion of the chain corresponds to 1-32 (MKAVSIEAGERSKAKRVHGVNRGISVFDLVLR). A helical membrane pass occupies residues 33–53 (IVALVGTLASAVAMGTAGQAL). At 54–73 (SFSTQIVNFEAQYDDIDAFK) the chain is on the extracellular side. Residues 74–94 (FFVVSNSITCVYLALSIPISI) traverse the membrane as a helical segment. The Cytoplasmic portion of the chain corresponds to 95–106 (FHIIRSRAGKSR). A helical membrane pass occupies residues 107–127 (VLLIVLDAIMLVFLTSGASAA). Over 128–160 (AAIVYLAHNGNTSTNWFSICQQYTDFCQRSAGS) the chain is Extracellular. A glycan (N-linked (GlcNAc...) asparagine) is linked at Asn138. A helical membrane pass occupies residues 161 to 181 (LIGSFGAMALMVLLIILSSIA). At 182–185 (LSRR) the chain is on the cytoplasmic side.

The protein belongs to the Casparian strip membrane proteins (CASP) family. In terms of assembly, homodimer and heterodimers.

It is found in the cell membrane. In terms of biological role, regulates membrane-cell wall junctions and localized cell wall deposition. Required for establishment of the Casparian strip membrane domain (CSD) and the subsequent formation of Casparian strips, a cell wall modification of the root endodermis that determines an apoplastic barrier between the intraorganismal apoplasm and the extraorganismal apoplasm and prevents lateral diffusion. The polypeptide is Casparian strip membrane protein 1 (Solanum demissum (Wild potato)).